The sequence spans 60 residues: Large ribosomal subunit protein uL30 (60 aa).

It belongs to the universal ribosomal protein uL30 family. In terms of assembly, part of the 50S ribosomal subunit.

The chain is Large ribosomal subunit protein uL30 from Streptomyces avermitilis (strain ATCC 31267 / DSM 46492 / JCM 5070 / NBRC 14893 / NCIMB 12804 / NRRL 8165 / MA-4680).